Consider the following 261-residue polypeptide: tRNA (guanine-N(7)-)-methyltransferase (261 aa).

The S-adenosyl-L-methionine site is built by glutamate 75, glutamate 100, aspartate 127, and aspartate 150. The active site involves aspartate 150. Lysine 154 lines the substrate pocket. Residues 156 to 161 (RHNKRR) form an interaction with RNA region. Substrate contacts are provided by residues aspartate 186 and 223–226 (THFE).

The protein belongs to the class I-like SAM-binding methyltransferase superfamily. TrmB family.

The catalysed reaction is guanosine(46) in tRNA + S-adenosyl-L-methionine = N(7)-methylguanosine(46) in tRNA + S-adenosyl-L-homocysteine. The protein operates within tRNA modification; N(7)-methylguanine-tRNA biosynthesis. In terms of biological role, catalyzes the formation of N(7)-methylguanine at position 46 (m7G46) in tRNA. The sequence is that of tRNA (guanine-N(7)-)-methyltransferase from Xanthomonas axonopodis pv. citri (strain 306).